Reading from the N-terminus, the 411-residue chain is Argininosuccinate synthase (411 aa).

ATP is bound by residues 15-23 (AYSGGLDTS) and Ala42. The L-citrulline site is built by Tyr93 and Ser98. An ATP-binding site is contributed by Gly123. L-aspartate-binding residues include Thr125, Asn129, and Asp130. L-citrulline is bound at residue Asn129. Positions 133, 185, 194, 270, and 282 each coordinate L-citrulline.

It belongs to the argininosuccinate synthase family. Type 1 subfamily. In terms of assembly, homotetramer.

It is found in the cytoplasm. It catalyses the reaction L-citrulline + L-aspartate + ATP = 2-(N(omega)-L-arginino)succinate + AMP + diphosphate + H(+). The protein operates within amino-acid biosynthesis; L-arginine biosynthesis; L-arginine from L-ornithine and carbamoyl phosphate: step 2/3. This chain is Argininosuccinate synthase, found in Psychrobacter sp. (strain PRwf-1).